The sequence spans 226 residues: MSANLDKSLDEIIGSNKAGSNRARVGGTRGNGPRRVGKQVGSQRRSLPNRRGPIRKNTRAPPNAVARVAKLLDTTREVKVNVEGLPRDIKQDAVREFFASQVGGVQRVLLSYNERGQSTGMANITFKNGELARRAVERFNGSPIDGGRSRLRLNLIVDPNQRPVKSLADRIKAMPQKGGNAPRPVKRGPNRKAAMAKSQNKPKREKPAKKSLEDLDKEMADYFEKK.

A disordered region spans residues 1-62 (MSANLDKSLD…PIRKNTRAPP (62 aa)). Ser2 bears the N-acetylserine mark. Phosphoserine occurs at positions 8 and 100. Residues 78–158 (VKVNVEGLPR…SRLRLNLIVD (81 aa)) form the RRM domain. The disordered stretch occupies residues 173 to 226 (AMPQKGGNAPRPVKRGPNRKAAMAKSQNKPKREKPAKKSLEDLDKEMADYFEKK). The span at 208–226 (AKKSLEDLDKEMADYFEKK) shows a compositional bias: basic and acidic residues.

In terms of assembly, component of the transcription/export (TREX) complex, which is at least is formed of SUB2, TEX1 and YRA1 and the THO complex composed of HPR1, MFT1, THO2 and THP1. Interacts with RDS3 and YRA2.

The protein localises to the nucleus. Functionally, RNA-binding RNA annealing protein. May have a role in pre-mRNA metabolism. Component the TREX complex, which operates in coupling transcription elongation to mRNA export. The sequence is that of RNA annealing protein YRA1 (YRA1) from Saccharomyces cerevisiae (strain ATCC 204508 / S288c) (Baker's yeast).